Here is a 505-residue protein sequence, read N- to C-terminus: DEAD-box ATP-dependent RNA helicase 38 (505 aa).

Residues 1 to 81 (MADGGKPPTP…DQGPPLLDDS (81 aa)) form a disordered region. Over residues 27–44 (KAAAAAEAASSSSSNEPA) the composition is skewed to low complexity. A Q motif motif is present at residues 100 to 129 (AAFEDLKLTPELLKGLHDEMGFSRPSKIQA). In terms of domain architecture, Helicase ATP-binding spans 134–310 (MILTPPYKDL…TRVIKDGNQI (177 aa)). 147–154 (AHNGSGKT) serves as a coordination point for ATP. Positions 254–257 (DEAD) match the DEAD box motif. A Helicase C-terminal domain is found at 338–493 (VIKDKIFEFG…EVRNWQSEED (156 aa)).

The protein belongs to the DEAD box helicase family. DDX19/DBP5 subfamily.

It is found in the cytoplasm. The protein resides in the nucleus. The catalysed reaction is ATP + H2O = ADP + phosphate + H(+). ATP-dependent RNA helicase essential for mRNA export from the nucleus. Plays an important role in the positive regulation of CBF/DREB transcription factors. In Oryza sativa subsp. japonica (Rice), this protein is DEAD-box ATP-dependent RNA helicase 38.